The chain runs to 271 residues: Diaminopimelate epimerase (271 aa).

Substrate is bound by residues asparagine 13, glutamine 46, and asparagine 66. The Proton donor role is filled by cysteine 75. Residues glycine 76–asparagine 77, asparagine 155, asparagine 188, and glutamate 206–arginine 207 contribute to the substrate site. Cysteine 215 serves as the catalytic Proton acceptor. Glycine 216–serine 217 is a substrate binding site.

Belongs to the diaminopimelate epimerase family. In terms of assembly, homodimer.

The protein localises to the cytoplasm. The enzyme catalyses (2S,6S)-2,6-diaminopimelate = meso-2,6-diaminopimelate. It participates in amino-acid biosynthesis; L-lysine biosynthesis via DAP pathway; DL-2,6-diaminopimelate from LL-2,6-diaminopimelate: step 1/1. In terms of biological role, catalyzes the stereoinversion of LL-2,6-diaminopimelate (L,L-DAP) to meso-diaminopimelate (meso-DAP), a precursor of L-lysine and an essential component of the bacterial peptidoglycan. This is Diaminopimelate epimerase from Vesicomyosocius okutanii subsp. Calyptogena okutanii (strain HA).